The sequence spans 277 residues: Undecaprenyl-diphosphatase (277 aa).

7 consecutive transmembrane segments (helical) span residues 3–23 (IALL…EFLP), 44–64 (AKVF…LVYW), 82–102 (QFAL…LLFG), 109–129 (LFTP…ILWA), 189–209 (TDFS…YSLF), 218–238 (ADAP…WLCI), and 253–273 (FAWY…SGVV).

The protein belongs to the UppP family.

The protein localises to the cell inner membrane. It carries out the reaction di-trans,octa-cis-undecaprenyl diphosphate + H2O = di-trans,octa-cis-undecaprenyl phosphate + phosphate + H(+). Catalyzes the dephosphorylation of undecaprenyl diphosphate (UPP). Confers resistance to bacitracin. The chain is Undecaprenyl-diphosphatase from Polaromonas naphthalenivorans (strain CJ2).